The sequence spans 344 residues: NADH-quinone oxidoreductase subunit H 2 (344 aa).

8 helical membrane-spanning segments follow: residues 13–33 (LPIL…VAWL), 82–102 (ILFL…WAVI), 116–136 (ALLY…LAGW), 161–181 (MGFA…GEIV), 188–208 (FWHW…ISGV), 240–260 (LFFL…ALMF), 280–300 (VPGI…YLWF), and 319–339 (VFIP…VAQL).

This sequence belongs to the complex I subunit 1 family. NDH-1 is composed of 14 different subunits. Subunits NuoA, H, J, K, L, M, N constitute the membrane sector of the complex.

It localises to the cell inner membrane. It carries out the reaction a quinone + NADH + 5 H(+)(in) = a quinol + NAD(+) + 4 H(+)(out). Its function is as follows. NDH-1 shuttles electrons from NADH, via FMN and iron-sulfur (Fe-S) centers, to quinones in the respiratory chain. The immediate electron acceptor for the enzyme in this species is believed to be ubiquinone. Couples the redox reaction to proton translocation (for every two electrons transferred, four hydrogen ions are translocated across the cytoplasmic membrane), and thus conserves the redox energy in a proton gradient. This subunit may bind ubiquinone. In Nitrosococcus oceani (strain ATCC 19707 / BCRC 17464 / JCM 30415 / NCIMB 11848 / C-107), this protein is NADH-quinone oxidoreductase subunit H 2.